The sequence spans 384 residues: MMKTKYLLLPLLASSSLLSHMAFANNHWPDLPIGVKNGVSAQIGSKVYVGLGSAEKSFYVLDTQAPQNGWTLLAEFIGPERSGATATVVGENIFVFGGSGKASDDASSPIIFDTVYRFDTQTNRWHQVKTQTPVGLLGASSYSPDGKQVLFFGGYSKPLFDKYLADITRTDKKAQPEQWQKIVDDYMGMEPLAYQWNRDVLSFNPTNDKWDVVTRSPYLPNCGSATVIDGPSITLISGEIKPGLRTAEVKTFTYGELQPWQSTYALPAAKGQAQQEGIAGAYSGVVSNTLLVAGGANFHGAKAQFESGQMFAHNGLSKAYNSEIYAKQKGVWQQVGQLPEGLAYGASFSVKGGVLMVGGERADRTASTKVYLVGLNNNQIDIVD.

The N-terminal stretch at 1 to 24 is a signal peptide; the sequence is MMKTKYLLLPLLASSSLLSHMAFA. 7 Kelch repeats span residues 46–90, 92–145, 147–184, 185–230, 233–281, 303–352, and 354–383; these read KVYV…TVVG, NIFV…YSPD, KQVLFFGGYSKPLFDKYLADITRTDKKAQPEQWQKIVD, DYMG…VIDG, ITLI…IAGA, AQFE…SVKG, and VLMVGGERADRTASTKVYLVGLNNNQIDIV. Glu-239 (proton acceptor) is an active-site residue.

Belongs to the NanM family. As to quaternary structure, homodimer.

It localises to the periplasm. The catalysed reaction is N-acetyl-alpha-neuraminate = N-acetyl-beta-neuraminate. Its function is as follows. Converts alpha-N-acetylneuranimic acid (Neu5Ac) to the beta-anomer, accelerating the equilibrium between the alpha- and beta-anomers. Probably facilitates sialidase-negative bacteria to compete successfully for limited amounts of extracellular Neu5Ac, which is likely taken up in the beta-anomer. In addition, the rapid removal of sialic acid from solution might be advantageous to the bacterium to damp down host responses. The chain is N-acetylneuraminate epimerase from Vibrio vulnificus (strain YJ016).